A 336-amino-acid polypeptide reads, in one-letter code: Glyceraldehyde-3-phosphate dehydrogenase (336 aa).

Residues 12–13 (RI), D34, R78, and T121 each bind NAD(+). D-glyceraldehyde 3-phosphate is bound by residues 151–153 (SCT), T182, R199, 212–213 (TG), and R235. Catalysis depends on C152, which acts as the Nucleophile. N316 contacts NAD(+).

It belongs to the glyceraldehyde-3-phosphate dehydrogenase family. Homotetramer.

The protein resides in the cytoplasm. It carries out the reaction D-glyceraldehyde 3-phosphate + phosphate + NAD(+) = (2R)-3-phospho-glyceroyl phosphate + NADH + H(+). Its pathway is carbohydrate degradation; glycolysis; pyruvate from D-glyceraldehyde 3-phosphate: step 1/5. In terms of biological role, catalyzes the oxidative phosphorylation of glyceraldehyde 3-phosphate (G3P) to 1,3-bisphosphoglycerate (BPG) using the cofactor NAD. The first reaction step involves the formation of a hemiacetal intermediate between G3P and a cysteine residue, and this hemiacetal intermediate is then oxidized to a thioester, with concomitant reduction of NAD to NADH. The reduced NADH is then exchanged with the second NAD, and the thioester is attacked by a nucleophilic inorganic phosphate to produce BPG. This Streptococcus dysgalactiae subsp. equisimilis (Streptococcus equisimilis) protein is Glyceraldehyde-3-phosphate dehydrogenase (gap).